The primary structure comprises 146 residues: D-aminoacyl-tRNA deacylase (146 aa).

The Gly-cisPro motif, important for rejection of L-amino acids motif lies at 138–139 (GP).

The protein belongs to the DTD family. As to quaternary structure, homodimer.

The protein localises to the cytoplasm. The enzyme catalyses glycyl-tRNA(Ala) + H2O = tRNA(Ala) + glycine + H(+). The catalysed reaction is a D-aminoacyl-tRNA + H2O = a tRNA + a D-alpha-amino acid + H(+). In terms of biological role, an aminoacyl-tRNA editing enzyme that deacylates mischarged D-aminoacyl-tRNAs. Also deacylates mischarged glycyl-tRNA(Ala), protecting cells against glycine mischarging by AlaRS. Acts via tRNA-based rather than protein-based catalysis; rejects L-amino acids rather than detecting D-amino acids in the active site. By recycling D-aminoacyl-tRNA to D-amino acids and free tRNA molecules, this enzyme counteracts the toxicity associated with the formation of D-aminoacyl-tRNA entities in vivo and helps enforce protein L-homochirality. This Xanthomonas euvesicatoria pv. vesicatoria (strain 85-10) (Xanthomonas campestris pv. vesicatoria) protein is D-aminoacyl-tRNA deacylase.